We begin with the raw amino-acid sequence, 122 residues long: Large ribosomal subunit protein uL14c (122 aa).

The protein belongs to the universal ribosomal protein uL14 family. Part of the 50S ribosomal subunit.

Its subcellular location is the plastid. It localises to the chloroplast. In terms of biological role, binds to 23S rRNA. The sequence is that of Large ribosomal subunit protein uL14c from Lepidium virginicum (Virginia pepperweed).